Reading from the N-terminus, the 662-residue chain is Serine/threonine kinase-like domain-containing protein STKLD1 (662 aa).

Residues 1–202 enclose the Protein kinase domain; that stretch reads MLNPGALGVN…ILDMATCSFL (202 aa). ATP is bound by residues 2–10 and Lys25; that span reads LNPGALGVN. Positions 639–662 are disordered; that stretch reads LQEDQLEPPAGQEAPLQGEPLFRP.

Belongs to the protein kinase superfamily. Ser/Thr protein kinase family. STKL subfamily.

In Mus musculus (Mouse), this protein is Serine/threonine kinase-like domain-containing protein STKLD1 (Stkld1).